The following is a 329-amino-acid chain: GTPase Obg (329 aa).

The 159-residue stretch at 1-159 (MQFIDQARIT…WPLQLELKLL (159 aa)) folds into the Obg domain. Residues 160 to 328 (AEVGIIGLPN…LLDQVWQLLG (169 aa)) enclose the OBG-type G domain. ATP contacts are provided by residues 166–173 (GLPNAGKS), 191–195 (FTTLV), 213–216 (DIPG), 280–283 (NKLE), and 309–311 (SAV). Residues S173 and T193 each contribute to the Mg(2+) site.

Belongs to the TRAFAC class OBG-HflX-like GTPase superfamily. OBG GTPase family. In terms of assembly, monomer. The cofactor is Mg(2+).

It is found in the cytoplasm. In terms of biological role, an essential GTPase which binds GTP, GDP and possibly (p)ppGpp with moderate affinity, with high nucleotide exchange rates and a fairly low GTP hydrolysis rate. Plays a role in control of the cell cycle, stress response, ribosome biogenesis and in those bacteria that undergo differentiation, in morphogenesis control. This Synechococcus sp. (strain WH7803) protein is GTPase Obg.